A 189-amino-acid polypeptide reads, in one-letter code: Protein Rex (189 aa).

A compositionally biased stretch (basic residues) spans 1–16 (MPKTRRGPRRSQRKRP). The interval 1–26 (MPKTRRGPRRSQRKRPPTPWPTSQGL) is disordered. The short motif at 2–18 (PKTRRGPRRSQRKRPPT) is the Nuclear localization signal, and RNA-binding (RxRE) element. Residues 56–70 (RPAYIVTPYWPPVQS) form a homomultimerization region. Ser70 is modified (phosphoserine; by host). A Nuclear export signal motif is present at residues 82 to 93 (LSAQLYSSLSLG). Residues 87–189 (YSSLSLGSPP…PPSPGPSCPR (103 aa)) form a disordered region. Residues 115–125 (IQPPTFHPPSS) show a composition bias toward pro residues. Residues 123 to 131 (PSSRPYANT) form a homomultimerization region. A Phosphothreonine; by host modification is found at Thr174. A Phosphoserine; by host modification is found at Ser177. Residues 178 to 189 (FPPPSPGPSCPR) show a composition bias toward pro residues.

It belongs to the deltaretrovirus Rex protein family. Homomultimer. Multimeric assembly is essential for activity and involves XPO1. Binds to human XPO1 and KPNB1. Interacts (via N-terminal nuclear localization signal) with human NPM1. In terms of processing, phosphorylated.

It localises to the host nucleus. It is found in the host nucleolus. The protein localises to the host cytoplasm. Its function is as follows. Rex escorts unspliced gag-pro-pol and singly spliced env mRNAs out of the nucleus of infected cells. These mRNAs carry a recognition sequence called Rex responsive element (RxRE or XRE) located at the 3' region of the long terminal repeat (LTR). This function is essential since most HTLV proteins are translated from unspliced or partially spliced pre-mRNAs that cannot exit the nucleus by the pathway used by fully processed cellular mRNAs. Rex itself is translated from a fully spliced mRNA that probably readily exits the nucleus. Rex's nuclear localization signal (NLS) binds directly to KPNB1/importin beta-1 without previous binding to KPNA1/importin alpha-1. KPNB1 binds to the GDP bound form of RAN (Ran-GDP) and targets Rex to the nucleus. In the nucleus, the conversion from Ran-GDP to Ran-GTP dissociates Rex from KPNB1 and allows Rex's binding to the RRE in viral pre-mRNAs. Rex multimerizes on the RRE via cooperative assembly. This multimerization is critical for its full biological activity, since it may shield the viral RNA from being spliced or down-regulated, and probably exposes Rex's nuclear export signal (NES) to the surface. Rex can then form a complex with XPO1/CRM1, RANBP3 and Ran-GTP, leading to nuclear export of the complex. Conversion from Ran-GTP to Ran-GDP mediates dissociation of the Rex/RRE/XPO1/RANBP3/RAN complex, so that Rex can return to the nucleus for a subsequent round of export. In Homo sapiens (Human), this protein is Protein Rex.